Reading from the N-terminus, the 78-residue chain is uncharacterized protein (78 aa).

A run of 2 helical transmembrane segments spans residues 7–27 (ICLV…FFQF) and 41–61 (LSRI…GLLF).

Its subcellular location is the cell membrane. This is an uncharacterized protein from Bacillus subtilis (strain 168).